The primary structure comprises 118 residues: Large ribosomal subunit protein uL18 (118 aa).

It belongs to the universal ribosomal protein uL18 family. As to quaternary structure, part of the 50S ribosomal subunit; part of the 5S rRNA/L5/L18/L25 subcomplex. Contacts the 5S and 23S rRNAs.

In terms of biological role, this is one of the proteins that bind and probably mediate the attachment of the 5S RNA into the large ribosomal subunit, where it forms part of the central protuberance. The sequence is that of Large ribosomal subunit protein uL18 from Ralstonia pickettii (strain 12J).